Consider the following 104-residue polypeptide: Complex III assembly factor LYRM7 (104 aa).

It belongs to the complex I LYR family. In terms of assembly, interacts with UQCRFS1.

It localises to the mitochondrion matrix. Assembly factor required for Rieske Fe-S protein UQCRFS1 incorporation into the cytochrome b-c1 (CIII) complex. Functions as a chaperone, binding to this subunit within the mitochondrial matrix and stabilizing it prior to its translocation and insertion into the late CIII dimeric intermediate within the mitochondrial inner membrane. The polypeptide is Complex III assembly factor LYRM7 (LYRM7) (Danio rerio (Zebrafish)).